We begin with the raw amino-acid sequence, 142 residues long: Hemoglobin subunit alpha (142 aa).

The region spanning 2–142 is the Globin domain; the sequence is VLSAADKGHV…VSTVLTSKYR (141 aa). Position 4 is a phosphoserine (S4). N6-succinyllysine is present on residues K8 and K12. K17 is subject to N6-acetyllysine; alternate. K17 is modified (N6-succinyllysine; alternate). Residue Y25 is modified to Phosphotyrosine. The residue at position 36 (S36) is a Phosphoserine. K41 bears the N6-succinyllysine mark. S50 is modified (phosphoserine). H59 contacts O2. H88 provides a ligand contact to heme b. Residue S103 is modified to Phosphoserine. Residue T109 is modified to Phosphothreonine. S125 is modified (phosphoserine). Residues T135 and T138 each carry the phosphothreonine modification. A Phosphoserine modification is found at S139.

It belongs to the globin family. As to quaternary structure, heterotetramer of two alpha chains and two beta chains. In terms of tissue distribution, red blood cells.

Its function is as follows. Involved in oxygen transport from the lung to the various peripheral tissues. Functionally, hemopressin acts as an antagonist peptide of the cannabinoid receptor CNR1. Hemopressin-binding efficiently blocks cannabinoid receptor CNR1 and subsequent signaling. In Notamacropus eugenii (Tammar wallaby), this protein is Hemoglobin subunit alpha (HBA).